The sequence spans 416 residues: Multifunctional CCA protein (416 aa).

ATP contacts are provided by G8 and R11. CTP contacts are provided by G8 and R11. Mg(2+) is bound by residues D21 and D23. 3 residues coordinate ATP: R91, R138, and R141. Residues R91, R138, and R141 each coordinate CTP. One can recognise an HD domain in the interval 229–331 (TGLHQELVSD…YELLQRCDAF (103 aa)).

Belongs to the tRNA nucleotidyltransferase/poly(A) polymerase family. Bacterial CCA-adding enzyme type 1 subfamily. Monomer. Can also form homodimers and oligomers. It depends on Mg(2+) as a cofactor. Ni(2+) serves as cofactor.

The catalysed reaction is a tRNA precursor + 2 CTP + ATP = a tRNA with a 3' CCA end + 3 diphosphate. It catalyses the reaction a tRNA with a 3' CCA end + 2 CTP + ATP = a tRNA with a 3' CCACCA end + 3 diphosphate. Its function is as follows. Catalyzes the addition and repair of the essential 3'-terminal CCA sequence in tRNAs without using a nucleic acid template. Adds these three nucleotides in the order of C, C, and A to the tRNA nucleotide-73, using CTP and ATP as substrates and producing inorganic pyrophosphate. tRNA 3'-terminal CCA addition is required both for tRNA processing and repair. Also involved in tRNA surveillance by mediating tandem CCA addition to generate a CCACCA at the 3' terminus of unstable tRNAs. While stable tRNAs receive only 3'-terminal CCA, unstable tRNAs are marked with CCACCA and rapidly degraded. The chain is Multifunctional CCA protein from Xylella fastidiosa (strain M12).